The chain runs to 92 residues: Major allergen I polypeptide chain 1 (92 aa).

An N-terminal signal peptide occupies residues 1–22 (MKGACVLVLLWAALLLISGGNC).

It belongs to the secretoglobin family. As to quaternary structure, heterotetramer composed of two non-covalently linked disulfide-linked heterodimer of chains 1 and 2. As to expression, saliva and sebaceous glands.

It localises to the secreted. This chain is Major allergen I polypeptide chain 1 (CH1), found in Felis catus (Cat).